We begin with the raw amino-acid sequence, 75 residues long: Mating pheromone Er-10 (75 aa).

An N-terminal signal peptide occupies residues 1–19 (MNKLAILAIIAMVLFSANA). Residues 20–37 (FRFQSRIRSNVEAKTETR) constitute a propeptide that is removed on maturation. 3 disulfide bridges follow: Cys40–Cys56, Cys47–Cys74, and Cys52–Cys64.

Homodimer.

The protein resides in the secreted. Mating ciliate pheromones (or gamones) are diffusible extracellular communication signals that distinguish different intraspecific classes of cells commonly referred to as 'mating types'. They prepare the latter for conjugation by changing their cell surface properties. The polypeptide is Mating pheromone Er-10 (MAT10) (Euplotes raikovi).